A 213-amino-acid chain; its full sequence is Major fimbrial subunit (213 aa).

Residues M1–A20 form the signal peptide. C41 and C81 are disulfide-bonded.

This sequence belongs to the fimbrial protein family.

The protein localises to the fimbrium. In terms of biological role, mediates adherence to oropharyngeal epithelial cells. Helps the airway colonization process. The sequence is that of Major fimbrial subunit (hifA) from Haemophilus influenzae.